We begin with the raw amino-acid sequence, 223 residues long: Probable amino-acid ABC transporter permease protein PatM (223 aa).

An ABC transmembrane type-1 domain is found at 19–210 (LGTTMEMATW…GVVVILTRVQ (192 aa)). 5 helical membrane-spanning segments follow: residues 23–43 (MEMA…LANI), 59–78 (ISFF…YYGL), 90–110 (AFSA…AESI), 156–176 (FIDM…EIMA), and 186–206 (FRFF…VVIL).

It belongs to the binding-protein-dependent transport system permease family. HisMQ subfamily.

It is found in the cell inner membrane. Its function is as follows. Probably part of a binding-protein-dependent transport system for an amino acid. Probably responsible for the translocation of the substrate across the membrane. This is Probable amino-acid ABC transporter permease protein PatM (patM) from Vibrio harveyi (Beneckea harveyi).